The primary structure comprises 221 residues: MADLKTQILDAYNFRHATKEFDPNKKVSDSDFEFILETGRLSPSSLGLEPWKFVVVQNPEFREKLREYTWGAQKQLPTASHFVLILARTAKDIKYNADYIKRHLKEVKQMPQDVYEGYLSKTEEFQKNDLHLLESDRTLFDWASKQTYIALGNMMTAAAQIGVDSCPIEGFQYDHIHRILEEEGLLENGSFDISVMVAFGYRVRDPRPKTRSAVEDVVKWV.

FMN is bound by residues 15–17 and 73–75; these read RHA and QKQ. 157-162 serves as a coordination point for NAD(+); that stretch reads AAAQIG. FMN is bound by residues 169–170 and arginine 211; that span reads EG.

The protein belongs to the nitroreductase family. As to quaternary structure, monomer. FMN serves as cofactor.

This Bacillus subtilis (strain 168) protein is Putative NAD(P)H nitroreductase YfkO (yfkO).